The following is a 457-amino-acid chain: Tubulin gamma-2 chain (457 aa).

Position 142 to 148 (142 to 148 (AGGTGSG)) interacts with GTP.

The protein belongs to the tubulin family. In terms of assembly, interacts with Ote. Expressed in nurse cells and oocytes of developing egg chambers.

The protein localises to the cytoplasm. It localises to the cytoskeleton. The protein resides in the microtubule organizing center. Its subcellular location is the centrosome. It is found in the spindle. Tubulin is the major constituent of microtubules. The gamma chain is found at microtubule organizing centers (MTOC) such as the spindle poles or the centrosome, suggesting that it is involved in the minus-end nucleation of microtubule assembly. Required for oocyte activation and consequently for organization of the female meiotic spindle. Essential for centrosome organization and assembly of biastral mitotic spindles in embryos. Plays a role in stabilizing the augmin complex on the meiotic spindle. The protein is Tubulin gamma-2 chain (gammaTub37C) of Drosophila melanogaster (Fruit fly).